The following is a 280-amino-acid chain: Beta-glucosyl-HMC-alpha-glucosyl-transferase (280 aa).

It participates in genetic information processing; DNA modification. Transfers a gentiobiosyl-group on a hydroxymethylcytosine residue in DNA. Is involved in a DNA modification process to protects the phage genome against its own nucleases and the host restriction endonuclease system. The polypeptide is Beta-glucosyl-HMC-alpha-glucosyl-transferase (Enterobacteria phage T2 (Bacteriophage T2)).